The primary structure comprises 73 residues: Toxin Td7 (73 aa).

The first 7 residues, 1 to 7 (IGMAVEC), serve as a signal peptide directing secretion. An LCN-type CS-alpha/beta domain is found at 8 to 70 (KDGYLVGADG…VWDSATNRCG (63 aa)). Intrachain disulfides connect Cys-18/Cys-69, Cys-22/Cys-44, Cys-30/Cys-50, and Cys-34/Cys-52. At Lys-71 the chain carries Lysine amide.

It belongs to the long (4 C-C) scorpion toxin superfamily. Sodium channel inhibitor family. Beta subfamily. As to expression, expressed by the venom gland.

Its subcellular location is the secreted. Beta toxins bind voltage-independently at site-4 of sodium channels (Nav) and shift the voltage of activation toward more negative potentials thereby affecting sodium channel activation and promoting spontaneous and repetitive firing. This is Toxin Td7 from Tityus discrepans (Venezuelan scorpion).